The primary structure comprises 249 residues: Probable hydroxyacylglutathione hydrolase ECU02_0580 (249 aa).

Zn(2+)-binding residues include His-75, His-77, Asp-79, His-80, His-126, Asp-144, and His-183. Substrate-binding positions include 183–185 (HDY) and 240–243 (RERK).

The protein belongs to the metallo-beta-lactamase superfamily. Glyoxalase II family. Requires Zn(2+) as cofactor.

Its subcellular location is the cytoplasm. The protein resides in the nucleus. It catalyses the reaction an S-(2-hydroxyacyl)glutathione + H2O = a 2-hydroxy carboxylate + glutathione + H(+). The protein operates within secondary metabolite metabolism; methylglyoxal degradation; (R)-lactate from methylglyoxal: step 2/2. In terms of biological role, thiolesterase that catalyzes the hydrolysis of S-D-lactoyl-glutathione to form glutathione and D-lactic acid. This Encephalitozoon cuniculi (strain GB-M1) (Microsporidian parasite) protein is Probable hydroxyacylglutathione hydrolase ECU02_0580.